The chain runs to 186 residues: Ribonuclease HII (186 aa).

The region spanning 2-186 (KILAGVDEVG…KTFSPISDLL (185 aa)) is the RNase H type-2 domain. A divalent metal cation contacts are provided by D8, E9, and D99.

This sequence belongs to the RNase HII family. The cofactor is Mn(2+). Requires Mg(2+) as cofactor.

The protein resides in the cytoplasm. The catalysed reaction is Endonucleolytic cleavage to 5'-phosphomonoester.. Endonuclease that specifically degrades the RNA of RNA-DNA hybrids. This chain is Ribonuclease HII, found in Pelagibacter ubique (strain HTCC1062).